We begin with the raw amino-acid sequence, 228 residues long: Orotidine 5'-phosphate decarboxylase (228 aa).

Substrate contacts are provided by residues Asp10, Lys33, 60-69 (DLKLYDIPHT), Thr116, Arg178, Gln187, Gly207, and Arg208. Catalysis depends on Lys62, which acts as the Proton donor.

The protein belongs to the OMP decarboxylase family. Type 1 subfamily. In terms of assembly, homodimer.

It catalyses the reaction orotidine 5'-phosphate + H(+) = UMP + CO2. It functions in the pathway pyrimidine metabolism; UMP biosynthesis via de novo pathway; UMP from orotate: step 2/2. Its function is as follows. Catalyzes the decarboxylation of orotidine 5'-monophosphate (OMP) to uridine 5'-monophosphate (UMP). The polypeptide is Orotidine 5'-phosphate decarboxylase (Oenococcus oeni (strain ATCC BAA-331 / PSU-1)).